The following is a 479-amino-acid chain: Ribulose bisphosphate carboxylase large chain (479 aa).

A propeptide spanning residues 1–2 is cleaved from the precursor; that stretch reads MS. The residue at position 3 (Pro3) is an N-acetylproline. The substrate site is built by Asn123 and Thr173. Lys175 serves as the catalytic Proton acceptor. Lys177 is a binding site for substrate. Lys201, Asp203, and Glu204 together coordinate Mg(2+). The residue at position 201 (Lys201) is an N6-carboxylysine. His294 acts as the Proton acceptor in catalysis. Residues Arg295, His327, and Ser379 each coordinate substrate.

It belongs to the RuBisCO large chain family. Type I subfamily. Heterohexadecamer of 8 large chains and 8 small chains; disulfide-linked. The disulfide link is formed within the large subunit homodimers. Requires Mg(2+) as cofactor. In terms of processing, the disulfide bond which can form in the large chain dimeric partners within the hexadecamer appears to be associated with oxidative stress and protein turnover.

It is found in the plastid. The protein resides in the chloroplast. It catalyses the reaction 2 (2R)-3-phosphoglycerate + 2 H(+) = D-ribulose 1,5-bisphosphate + CO2 + H2O. It carries out the reaction D-ribulose 1,5-bisphosphate + O2 = 2-phosphoglycolate + (2R)-3-phosphoglycerate + 2 H(+). Functionally, ruBisCO catalyzes two reactions: the carboxylation of D-ribulose 1,5-bisphosphate, the primary event in carbon dioxide fixation, as well as the oxidative fragmentation of the pentose substrate in the photorespiration process. Both reactions occur simultaneously and in competition at the same active site. In Hordeum vulgare (Barley), this protein is Ribulose bisphosphate carboxylase large chain.